Consider the following 606-residue polypeptide: RUN and FYVE domain-containing protein 2 (606 aa).

The region spanning 37 to 169 is the RUN domain; that stretch reads DSDYPPLQQF…IDANLCVKGE (133 aa). Residues 210–534 are a coiled coil; the sequence is EELNRQLNST…IKEANKALQG (325 aa). Residues 540 to 598 form an FYVE-type zinc finger; sequence DKEATHCKLCEKEFSLSKRKHHCRNCGEIFCNACSDNELPLPSSPKPVRVCDSCHALLI. Residues Cys-546, Cys-549, Cys-562, Cys-565, Cys-570, Cys-573, Cys-590, and Cys-593 each coordinate Zn(2+).

In terms of assembly, interacts with BMX. Expressed in brain, lung and testis.

It localises to the nucleus. The chain is RUN and FYVE domain-containing protein 2 (RUFY2) from Homo sapiens (Human).